The chain runs to 149 residues: DnaJ homolog subfamily C member 24 (149 aa).

One can recognise a J domain in the interval 11–82 (DWYSILGADP…ETKKEYDLQR (72 aa)). The 56-residue stretch at 93-148 (VDARIYLEEMSWNEDDHSFSLSCRCGGKYSVSKDEAEEVTLISCDTCSLIIELLHY) folds into the DPH-type MB domain. Residues C115, C117, C136, and C139 each coordinate Zn(2+).

This sequence belongs to the DPH4 family. Monomer and homooligomer. Iron binding promotes oligomerization.

The protein resides in the cytoplasm. The protein localises to the cytoskeleton. It functions in the pathway protein modification; peptidyl-diphthamide biosynthesis. Stimulates the ATPase activity of several Hsp70-type chaperones. This ability is enhanced by iron-binding. The iron-bound form is redox-active and can function as electron carrier. Plays a role in the diphthamide biosynthesis, a post-translational modification of histidine which occurs in translation elongation factor 2 (EEF2). This chain is DnaJ homolog subfamily C member 24 (DNAJC24), found in Bos taurus (Bovine).